We begin with the raw amino-acid sequence, 924 residues long: Cell division control protein 13 (924 aa).

Residues 265–336 (PTTDISNMGE…KRKRKLSFHS (72 aa)) form a disordered region. Over residues 295–308 (GKYFSSKSYIQSQT) the composition is skewed to polar residues. Ser306 carries the phosphoserine modification. At Thr308 the chain carries Phosphothreonine. Over residues 309–326 (PERKTSVPNNWHDDDSGS) the composition is skewed to basic and acidic residues. A Phosphoserine modification is found at Ser333. The OB DNA-binding region spans 500 to 686 (KMARKDPTIE…FEEYRRFFPI (187 aa)).

As to quaternary structure, interacts with POL1, EST1, FUN12, STM1, STN1 and TEN1.

The protein resides in the chromosome. It localises to the telomere. Single-stranded telomeric DNA-binding protein that regulates telomere replication. Has a role in both positive and negative regulation. Promotes [TG(1-3)] strand lengthening via interaction with EST1. Promotes [C(1-3)A] strand re-synthesis by DNA polymerase alpha via interaction with POL1. Negatively regulates telomere elongation of the G strand via binding with STN1 thereby inhibiting telomerase activity. This is Cell division control protein 13 (CDC13) from Saccharomyces cerevisiae (strain ATCC 204508 / S288c) (Baker's yeast).